Reading from the N-terminus, the 711-residue chain is Protein Smaug homolog 1 (711 aa).

Ser-168 carries the post-translational modification Phosphoserine. Positions Ala-278–Ser-323 are disordered. One can recognise an SAM domain in the interval Ser-323 to Glu-396. Ser-420 carries the phosphoserine modification. 2 disordered regions span residues Ser-422–Ala-448 and Asn-565–Asn-588. Thr-424 carries the phosphothreonine modification. Arg-566 bears the Omega-N-methylarginine mark. Residues Phe-568 to Gly-581 are compositionally biased toward polar residues. The residue at position 573 (Ser-573) is a Phosphoserine.

This sequence belongs to the SMAUG family. In terms of tissue distribution, expressed in brain (at protein level).

It localises to the cytoplasm. The protein localises to the cell projection. It is found in the dendrite. The protein resides in the synapse. Its subcellular location is the synaptosome. In terms of biological role, acts as a translational repressor of SRE-containing messengers. The polypeptide is Protein Smaug homolog 1 (Samd4a) (Mus musculus (Mouse)).